The sequence spans 347 residues: Ryncolin-2 (347 aa).

Residues 1–19 (MKPWAAFHLIFLVASSLEG) form the signal peptide. Residues 49–115 (LQSQPGIPGI…DKGDKGDKGD (67 aa)) form a disordered region. The region spanning 57–114 (GIPGVPGINGSEGLKGDPGPQGLPGETGFDGIPGVAGPKGDKGDQGDKGDKGDKGDKG) is the Collagen-like domain. Positions 95–115 (KGDKGDQGDKGDKGDKGDKGD) are enriched in basic and acidic residues. The Fibrinogen C-terminal domain occupies 121–341 (DCPPTDVEVR…YADMKIRPQQ (221 aa)). 2 disulfide bridges follow: Cys-132-Cys-160 and Cys-284-Cys-297.

The protein belongs to the ficolin lectin family. Veficolin subfamily. Post-translationally, hydroxylated, possibly at Pro-74 and Pro-94. Expressed by the venom duct.

The protein resides in the secreted. Its function is as follows. Initiates complement activation and/or interferes in platelet aggregation and/or blood coagulation. This is Ryncolin-2 from Cerberus rynchops (Dog-faced water snake).